A 286-amino-acid chain; its full sequence is Translocon-associated protein subunit alpha (286 aa).

Positions 1–21 (MRLLPRLLLLLLLVFPATVLL) are cleaved as a signal peptide. Over 22 to 207 (RGGPGGSLAE…EREDGLDGQT (186 aa)) the chain is Lumenal. The interval 28-83 (SLAEAQDLSEDEETVEDSVIEDEDDEAEVEEDEPTDLAEDREEEDVSGEPEASPSA) is disordered. A compositionally biased stretch (acidic residues) spans 34–75 (DLSEDEETVEDSVIEDEDDEAEVEEDEPTDLAEDREEEDVSG). Residues N136 and N191 are each glycosylated (N-linked (GlcNAc...) asparagine). A helical membrane pass occupies residues 208–228 (IFMYMSLAGLGLLVVVGLHQL). The Cytoplasmic portion of the chain corresponds to 229-286 (LESRNRKRPIQKVEMGTSSQNDVDMSWIPQETLNQINKASPRRLPRKRPQKRSVGSDE). Position 247 is a phosphoserine (S247). Residue T260 is modified to Phosphothreonine. A disordered region spans residues 264–286 (INKASPRRLPRKRPQKRSVGSDE). S268 carries the post-translational modification Phosphoserine. The span at 268-279 (SPRRLPRKRPQK) shows a compositional bias: basic residues.

It belongs to the TRAP-alpha family. Heterotetramer of TRAP-alpha, TRAP-beta, TRAP-delta and TRAP-gamma. Interacts with palmitoylated calnexin (CALX), the interaction is required for efficient folding of glycosylated proteins. Phosphorylated in its cytoplasmic tail.

The protein resides in the endoplasmic reticulum membrane. In terms of biological role, TRAP proteins are part of a complex whose function is to bind calcium to the ER membrane and thereby regulate the retention of ER resident proteins. May be involved in the recycling of the translocation apparatus after completion of the translocation process or may function as a membrane-bound chaperone facilitating folding of translocated proteins. This chain is Translocon-associated protein subunit alpha (SSR1), found in Oryctolagus cuniculus (Rabbit).